A 283-amino-acid polypeptide reads, in one-letter code: Flagellar filament 35 kDa core protein (283 aa).

The protein belongs to the bacterial flagellin family. As to quaternary structure, the flagellum consists of two outer layers around a core that contains several antigenically related polypeptides.

Its subcellular location is the periplasmic flagellum. It localises to the periplasm. Its function is as follows. Component of the core of the flagella. The sequence is that of Flagellar filament 35 kDa core protein (flaB) from Leptospira interrogans serogroup Icterohaemorrhagiae serovar Lai (strain 56601).